We begin with the raw amino-acid sequence, 449 residues long: Flavonol 7-O-beta-glucosyltransferase UGT74F1 (449 aa).

His18 functions as the Proton acceptor in the catalytic mechanism. Position 18 (His18) interacts with an anthocyanidin. Residue Asp111 is the Charge relay of the active site. Residues Thr133, Gln327, His342, Trp345, Asn346, Ser347, Glu350, Asp366, and Gln367 each coordinate UDP-alpha-D-glucose.

It belongs to the UDP-glycosyltransferase family.

It carries out the reaction a 7-O-hydroxy-flavonol + UDP-alpha-D-glucose = a flavonol 7-O-beta-D-glucoside + UDP + H(+). In terms of biological role, possesses quercetin 7-O-glucosyltransferase and 4'-O-glucosyltransferase activities in vitro. Also active in vitro on benzoates and benzoate derivatives. Has low affinity for the tryptophan precursor anthranilate. Catalyzes the formation of anthranilate glucose ester. Is a minor source of this activity in the plant. The polypeptide is Flavonol 7-O-beta-glucosyltransferase UGT74F1 (Arabidopsis thaliana (Mouse-ear cress)).